The sequence spans 78 residues: MFKTINKSITSILLFMISFYQKWFSPFFGPRCRFIPSCSSYGYEAITRHGPWKGGWLTLRRLSRCHPLTPCGCDPVPD.

This sequence belongs to the UPF0161 family.

The protein localises to the cell inner membrane. Its function is as follows. Could be involved in insertion of integral membrane proteins into the membrane. This is Putative membrane protein insertion efficiency factor from Prochlorococcus marinus (strain MIT 9312).